Here is a 476-residue protein sequence, read N- to C-terminus: Ubiquinone biosynthesis monooxygenase COQ6, mitochondrial (476 aa).

Residues 1–42 constitute a mitochondrion transit peptide; sequence MAARIGPMAGLLCVRWWSTAQLAARGGPLVACRRWTSSSTDS.

This sequence belongs to the UbiH/COQ6 family. As to quaternary structure, component of a multi-subunit COQ enzyme complex, composed of at least COQ3, COQ4, COQ5, COQ6, COQ7 and COQ9. Interacts with COQ8B and COQ7. FAD serves as cofactor. In terms of tissue distribution, in the kidney, expressed almost exclusively in glomerular podocytes. In the inner ear, expressed in the spiral ganglion, as well as in stria vascularis and spiral ligament cells.

It localises to the mitochondrion inner membrane. The protein resides in the golgi apparatus. Its subcellular location is the cell projection. It catalyses the reaction 4-hydroxy-3-(all-trans-decaprenyl)benzoate + 2 reduced [2Fe-2S]-[ferredoxin] + O2 + 2 H(+) = 3,4-dihydroxy-5-(all-trans-decaprenyl)benzoate + 2 oxidized [2Fe-2S]-[ferredoxin] + H2O. The catalysed reaction is 2-methoxy-6-(all-trans-decaprenyl)phenol + 2 reduced [2Fe-2S]-[ferredoxin] + O2 + 2 H(+) = 2-methoxy-6-(all-trans-decaprenyl)benzene-1,4-diol + 2 oxidized [2Fe-2S]-[ferredoxin] + H2O. The protein operates within cofactor biosynthesis; ubiquinone biosynthesis. FAD-dependent monooxygenase required for two non-consecutive steps during ubiquinone biosynthesis. Required for the C5-ring hydroxylation during ubiquinone biosynthesis by catalyzing the hydroxylation of 4-hydroxy-3-(all-trans-decaprenyl)benzoic acid to 3,4-dihydroxy-5-(all-trans-decaprenyl)benzoic acid. Also acts downstream of COQ4, for the C1-hydroxylation during ubiquinone biosynthesis by catalyzing the hydroxylation of 2-methoxy-6-(all-trans-decaprenyl)phenol to 2-methoxy-6-(all-trans-decaprenyl)benzene-1,4-diol. The electrons required for the hydroxylation reaction are funneled indirectly to COQ6 from NADPH via a ferredoxin/ferredoxin reductase system composed of FDX2 and FDXR. The polypeptide is Ubiquinone biosynthesis monooxygenase COQ6, mitochondrial (Rattus norvegicus (Rat)).